The primary structure comprises 88 residues: Small ribosomal subunit protein eS25B (88 aa).

Belongs to the eukaryotic ribosomal protein eS25 family. Component of the small ribosomal subunit (SSU). Mature yeast ribosomes consist of a small (40S) and a large (60S) subunit. The 40S small subunit contains 1 molecule of ribosomal RNA (18S rRNA) and at least 33 different proteins. The large 60S subunit contains 3 rRNA molecules (25S, 5.8S and 5S rRNA) and at least 46 different proteins.

It localises to the cytoplasm. Its function is as follows. Component of the ribosome, a large ribonucleoprotein complex responsible for the synthesis of proteins in the cell. The small ribosomal subunit (SSU) binds messenger RNAs (mRNAs) and translates the encoded message by selecting cognate aminoacyl-transfer RNA (tRNA) molecules. The large subunit (LSU) contains the ribosomal catalytic site termed the peptidyl transferase center (PTC), which catalyzes the formation of peptide bonds, thereby polymerizing the amino acids delivered by tRNAs into a polypeptide chain. The nascent polypeptides leave the ribosome through a tunnel in the LSU and interact with protein factors that function in enzymatic processing, targeting, and the membrane insertion of nascent chains at the exit of the ribosomal tunnel. The protein is Small ribosomal subunit protein eS25B (rps2501) of Schizosaccharomyces pombe (strain 972 / ATCC 24843) (Fission yeast).